The following is a 24-amino-acid chain: Outer membrane protein (24 aa).

Belongs to the Gram-negative porin family. Homotrimer.

The protein resides in the cell outer membrane. Forms pores that allow passive diffusion of small molecules across the outer membrane. This Sodalis glossinidius protein is Outer membrane protein.